The primary structure comprises 344 residues: RNA 3'-terminal phosphate cyclase (344 aa).

Residues Gln103 and 283-287 each bind ATP; that span reads HLADQ. His308 (tele-AMP-histidine intermediate) is an active-site residue.

This sequence belongs to the RNA 3'-terminal cyclase family. Type 1 subfamily.

The protein resides in the cytoplasm. It carries out the reaction a 3'-end 3'-phospho-ribonucleotide-RNA + ATP = a 3'-end 2',3'-cyclophospho-ribonucleotide-RNA + AMP + diphosphate. Its function is as follows. Catalyzes the conversion of 3'-phosphate to a 2',3'-cyclic phosphodiester at the end of RNA. The mechanism of action of the enzyme occurs in 3 steps: (A) adenylation of the enzyme by ATP; (B) transfer of adenylate to an RNA-N3'P to produce RNA-N3'PP5'A; (C) and attack of the adjacent 2'-hydroxyl on the 3'-phosphorus in the diester linkage to produce the cyclic end product. The biological role of this enzyme is unknown but it is likely to function in some aspects of cellular RNA processing. This Salmonella paratyphi C (strain RKS4594) protein is RNA 3'-terminal phosphate cyclase.